The sequence spans 600 residues: Aspartate--tRNA(Asp/Asn) ligase (600 aa).

Glutamate 176 contributes to the L-aspartate binding site. Positions glutamine 200 to lysine 203 are aspartate. The L-aspartate site is built by arginine 222 and histidine 452. Arginine 222–glutamate 224 lines the ATP pocket. Glutamate 490 contributes to the ATP binding site. Arginine 497 contacts L-aspartate. Glycine 542–arginine 545 contacts ATP.

This sequence belongs to the class-II aminoacyl-tRNA synthetase family. Type 1 subfamily. Homodimer.

The protein resides in the cytoplasm. It catalyses the reaction tRNA(Asx) + L-aspartate + ATP = L-aspartyl-tRNA(Asx) + AMP + diphosphate. Its function is as follows. Aspartyl-tRNA synthetase with relaxed tRNA specificity since it is able to aspartylate not only its cognate tRNA(Asp) but also tRNA(Asn). Reaction proceeds in two steps: L-aspartate is first activated by ATP to form Asp-AMP and then transferred to the acceptor end of tRNA(Asp/Asn). The polypeptide is Aspartate--tRNA(Asp/Asn) ligase (Rickettsia felis (strain ATCC VR-1525 / URRWXCal2) (Rickettsia azadi)).